Here is a 261-residue protein sequence, read N- to C-terminus: MRVALGIEYDGSQYFGWQRQAEVDTVQERLEKALSIVANEPIAVQCAGRTDAGVHATGQVVHFETNAVRKDTAWTLGVNVNLPDNIAVRWVKVVDDEFHARFTATARRYRYMIYNHQLRPGILRSGVSHYPGVIDEAKMHQAAQYLLGEQDFTSFRAVQCQSNTPFRCVHEVNVSRQGMYICVDIKANAFLHHMVRNIVGSLLEVGLGNQPIEWIEQLLALKDRNKAAATAKPNGLYLVDVTYPESYQLPKLSLGPLFMLD.

The active-site Nucleophile is aspartate 51. Position 109 (tyrosine 109) interacts with substrate.

Belongs to the tRNA pseudouridine synthase TruA family. As to quaternary structure, homodimer.

The enzyme catalyses uridine(38/39/40) in tRNA = pseudouridine(38/39/40) in tRNA. In terms of biological role, formation of pseudouridine at positions 38, 39 and 40 in the anticodon stem and loop of transfer RNAs. In Shewanella halifaxensis (strain HAW-EB4), this protein is tRNA pseudouridine synthase A.